Reading from the N-terminus, the 271-residue chain is Ribosomal RNA small subunit methyltransferase A (271 aa).

The S-adenosyl-L-methionine site is built by His-11, Leu-13, Gly-38, Glu-59, Asp-84, and Asn-109.

This sequence belongs to the class I-like SAM-binding methyltransferase superfamily. rRNA adenine N(6)-methyltransferase family. RsmA subfamily.

Its subcellular location is the cytoplasm. The enzyme catalyses adenosine(1518)/adenosine(1519) in 16S rRNA + 4 S-adenosyl-L-methionine = N(6)-dimethyladenosine(1518)/N(6)-dimethyladenosine(1519) in 16S rRNA + 4 S-adenosyl-L-homocysteine + 4 H(+). Functionally, specifically dimethylates two adjacent adenosines (A1518 and A1519) in the loop of a conserved hairpin near the 3'-end of 16S rRNA in the 30S particle. May play a critical role in biogenesis of 30S subunits. The sequence is that of Ribosomal RNA small subunit methyltransferase A from Nostoc sp. (strain PCC 7120 / SAG 25.82 / UTEX 2576).